Reading from the N-terminus, the 697-residue chain is MTELSKYRNIGIFAHVDAGKTTTTERILKLTGRIHKAGETHDGESTTDFMVQEAERGITIQSAAVSCFWKDHRFNVIDTPGHVDFTVEVYRSLKVLDGGIAVFCGSGGVEPQSETNWRYANESEVARIIFVNKLDRMGADFLRVVKQTKDVLAATPLVMVLPIGIEDEFKGVVDLLTRQAYVWDETGLPENYSIQEIPADMVDLVEEYREQLIETAVEQDDDLMEAYMEGEEPSIEDLKRCIRKGTRTMAFFPTFCGSAFKNKGMQLVLDAVVDYLPAPNEVDPQPLTDEEGNETGEYAIVSADESLKALAFKIMDDRFGALTFVRIYSGRLKKGDTILNSATGKTERIGRMCEMLANDRIEIESAEAGDIIAIVGMKNVQTGHTLCDVKYPCTLEAMVFPEPVISIAVAPKDKGGSEKMAIAIGKMIAEDPSFRVETDEDSGETILKGMGELHLDIKVDILKRTYGVELIVGEPQVAYRETITQMVEDQYTHKKQSGGSGQFGKIEYIIRPGEPNSGFVFKSSVVGGNVPKEYWPAVEKGFASMMNTGTIAGFPVLDVEFELTDGAYHAVDSSAIAFEIAAKAAFRQSIAKAKPQLLEPIMKVDVFSPDDNVGDVIGDLNRRRGMIKDQVAGVTGVRVKADVPLSEMFGYIGTLRTMTSGRGQFSMEFSHYSPCPNSVADKVVEQVKERKAAEAKK.

In terms of domain architecture, tr-type G spans 5–280; that stretch reads SKYRNIGIFA…AVVDYLPAPN (276 aa). GTP-binding positions include 14–21, 78–82, and 132–135; these read AHVDAGKT, DTPGH, and NKLD.

This sequence belongs to the TRAFAC class translation factor GTPase superfamily. Classic translation factor GTPase family. EF-G/EF-2 subfamily.

Its subcellular location is the cytoplasm. Functionally, catalyzes the GTP-dependent ribosomal translocation step during translation elongation. During this step, the ribosome changes from the pre-translocational (PRE) to the post-translocational (POST) state as the newly formed A-site-bound peptidyl-tRNA and P-site-bound deacylated tRNA move to the P and E sites, respectively. Catalyzes the coordinated movement of the two tRNA molecules, the mRNA and conformational changes in the ribosome. In Shewanella sp. (strain MR-4), this protein is Elongation factor G 2.